The chain runs to 320 residues: Nicotianamine synthase 2 (320 aa).

The protein belongs to the nicotianamine synthase (NAS)-like family.

It catalyses the reaction 3 S-adenosyl-L-methionine = nicotianamine + 3 S-methyl-5'-thioadenosine + 3 H(+). Functionally, synthesizes nicotianamine, a polyamine which serves as a sensor for the physiological iron status within the plant, and/or might be involved in the transport of iron. The protein is Nicotianamine synthase 2 (NAS2) of Arabidopsis thaliana (Mouse-ear cress).